The following is a 254-amino-acid chain: Proteasome subunit alpha type-7 (254 aa).

The O-linked (GlcNAc) serine glycan is linked to Ser-136. Tyr-159 carries the phosphotyrosine modification. Lys-233 carries the post-translational modification N6-acetyllysine.

The protein belongs to the peptidase T1A family. As to quaternary structure, the 26S proteasome consists of a 20S proteasome core and two 19S regulatory subunits. The 20S proteasome core is a barrel-shaped complex made of 28 subunits that are arranged in four stacked rings. The two outer rings are each formed by seven alpha subunits, and the two inner rings are formed by seven beta subunits. The proteolytic activity is exerted by three beta-subunits PSMB5, PSMB6 and PSMB7. PSMA7 interacts directly with the PSMG1-PSMG2 heterodimer which promotes 20S proteasome assembly. Interacts with HIF1A. Interacts with RAB7A. Interacts with PRKN. Interacts with ABL1 and ABL2. Interacts with EMAP2. Interacts with MAVS. Ubiquitous.

It localises to the cytoplasm. The protein localises to the nucleus. Component of the 20S core proteasome complex involved in the proteolytic degradation of most intracellular proteins. This complex plays numerous essential roles within the cell by associating with different regulatory particles. Associated with two 19S regulatory particles, forms the 26S proteasome and thus participates in the ATP-dependent degradation of ubiquitinated proteins. The 26S proteasome plays a key role in the maintenance of protein homeostasis by removing misfolded or damaged proteins that could impair cellular functions, and by removing proteins whose functions are no longer required. Associated with the PA200 or PA28, the 20S proteasome mediates ubiquitin-independent protein degradation. This type of proteolysis is required in several pathways including spermatogenesis (20S-PA200 complex) or generation of a subset of MHC class I-presented antigenic peptides (20S-PA28 complex). Inhibits the transactivation function of HIF-1A under both normoxic and hypoxia-mimicking conditions. The interaction with EMAP2 increases the proteasome-mediated HIF-1A degradation under the hypoxic conditions. Plays a role in hepatitis C virus internal ribosome entry site-mediated translation. Mediates nuclear translocation of the androgen receptor (AR) and thereby enhances androgen-mediated transactivation. Promotes MAVS degradation and thereby negatively regulates MAVS-mediated innate immune response. The chain is Proteasome subunit alpha type-7 (Psma7) from Rattus norvegicus (Rat).